A 267-amino-acid polypeptide reads, in one-letter code: Glutamate 5-kinase (267 aa).

Residue Lys-14 participates in ATP binding. Positions 54, 141, and 157 each coordinate substrate. Residues 177 to 178 and 219 to 225 contribute to the ATP site; these read SD and TGGMLSK.

Belongs to the glutamate 5-kinase family.

It is found in the cytoplasm. It carries out the reaction L-glutamate + ATP = L-glutamyl 5-phosphate + ADP. The protein operates within amino-acid biosynthesis; L-proline biosynthesis; L-glutamate 5-semialdehyde from L-glutamate: step 1/2. In terms of biological role, catalyzes the transfer of a phosphate group to glutamate to form L-glutamate 5-phosphate. The protein is Glutamate 5-kinase of Streptococcus agalactiae serotype Ia (strain ATCC 27591 / A909 / CDC SS700).